The chain runs to 349 residues: MGFSPLISCSAMGALILSCLLLQASNSNAQLRPDFYFRTCPSVFNIIGDIIVDELRTDPRIAASLLRLHFHDCFVRGCDASILLDNSTSFRTEKDAAPNANSARGFGVIDRMKTSLERACPRTVSCADVLTIASQISVLLSGGPWWPVPLGRRDSVEAFFDLANTALPSPFFTLAQLKKAFADVGLNRPSDLVALSGGHTFGRAQCQFVTPRLYNFNGTNRPDPTLDPTYLVQLRALCPQNGNGTVLVNFDVVTPNTFDRQYYTNLRNGKGLIQSDQELFSTPGADTIPLVNLYSSNTFAFFGAFVDAMIRMGNLRPLTGTQGEIRQNCRVVNSRIRGMENDDGVVSSI.

The signal sequence occupies residues 1-29 (MGFSPLISCSAMGALILSCLLLQASNSNA). 4 cysteine pairs are disulfide-bonded: cysteine 40/cysteine 120, cysteine 73/cysteine 78, cysteine 126/cysteine 329, and cysteine 206/cysteine 238. Histidine 71 functions as the Proton acceptor in the catalytic mechanism. Positions 72, 75, 77, 79, and 81 each coordinate Ca(2+). The N-linked (GlcNAc...) asparagine glycan is linked to asparagine 86. Proline 168 is a binding site for substrate. Histidine 199 contacts heme b. Threonine 200 is a binding site for Ca(2+). Residues asparagine 217 and asparagine 243 are each glycosylated (N-linked (GlcNAc...) asparagine). Aspartate 251, threonine 254, and aspartate 259 together coordinate Ca(2+).

This sequence belongs to the peroxidase family. Classical plant (class III) peroxidase subfamily. Ca(2+) is required as a cofactor. Requires heme b as cofactor.

Its subcellular location is the secreted. The protein resides in the vacuole. It carries out the reaction 2 a phenolic donor + H2O2 = 2 a phenolic radical donor + 2 H2O. Functionally, removal of H(2)O(2), oxidation of toxic reductants, biosynthesis and degradation of lignin, suberization, auxin catabolism, response to environmental stresses such as wounding, pathogen attack and oxidative stress. These functions might be dependent on each isozyme/isoform in each plant tissue. This is Peroxidase C3 (PRXC3) from Armoracia rusticana (Horseradish).